We begin with the raw amino-acid sequence, 523 residues long: MSQQVIIFDTTLRDGEQALQASLSVKEKLQIALALERMGVDVMEVGFPVSSPGDFESVQTIARQVKNSRVCALARCVEKDIDVAAESLKVAEAFRIHTFIATSPMHIATKLRSTLDEVIERAIYMVKRARNYTDDVEFSCEDAGRTPIADLARVVEAAINAGATTINIPDTVGYTMPFEFAGIISGLYERVPNIDKAIISVHTHDDLGLAVGNSLAAVHAGARQVEGAMNGIGERAGNCSLEEVIMAIKVRKDILNVHTAINHQEIWRTSQLVSQICNMPIPANKAIVGSGAFAHSSGIHQDGVLKNRENYEIMTPESIGLNQIQLNLTSRSGRAAVKHRMDEMGYKESEYNLDNLYDAFLKLADKKGQVFDYDLEALAFIGKQQEEPEHFRLDYFSVQSGSNDIATAAVKLACGEEVKAEAANGNGPVDAVYQAINRITEYNVELVKYSLTAKGHGKDALGQVDIVANYNGRRFHGVGLATDIVESSAKAMVHVLNNIWRAAEVEKELQRKAQHNENNKETV.

One can recognise a Pyruvate carboxyltransferase domain in the interval 5 to 267 (VIIFDTTLRD…HTAINHQEIW (263 aa)). Residues Asp14, His202, His204, and Asn238 each coordinate Mn(2+). The regulatory domain stretch occupies residues 392-523 (RLDYFSVQSG…QHNENNKETV (132 aa)).

The protein belongs to the alpha-IPM synthase/homocitrate synthase family. LeuA type 1 subfamily. As to quaternary structure, homodimer. It depends on Mn(2+) as a cofactor.

It is found in the cytoplasm. The enzyme catalyses 3-methyl-2-oxobutanoate + acetyl-CoA + H2O = (2S)-2-isopropylmalate + CoA + H(+). Its pathway is amino-acid biosynthesis; L-leucine biosynthesis; L-leucine from 3-methyl-2-oxobutanoate: step 1/4. In terms of biological role, catalyzes the condensation of the acetyl group of acetyl-CoA with 3-methyl-2-oxobutanoate (2-ketoisovalerate) to form 3-carboxy-3-hydroxy-4-methylpentanoate (2-isopropylmalate). The sequence is that of 2-isopropylmalate synthase from Escherichia coli (strain K12 / MC4100 / BW2952).